The sequence spans 74 residues: M-myrmeciitoxin-Mb1a (74 aa).

The first 26 residues, 1 to 26 (MKLSCLLLTLAIIVVLTIVHAPNVEA), serve as a signal peptide directing secretion. The propeptide occupies 27–50 (KALADPESDAVGFADAVGEADPNA). Position 73 is a glutamine amide (Gln73).

It belongs to the formicidae venom precursor-01 superfamily. Ant pilosulin family. Expressed by the venom gland.

Its subcellular location is the secreted. Functionally, shows moderate activity against E.coli and S.aureus (MIC&lt;25 uM), slight activity against B.subtilis (MIC&lt;50 uM), and no activity against L.garvieae, P.aeruginosa, C.albicans, and S.cerevisiae. Has no hemolytic nor cytolytic activity. Causes an IgE-independent histamine release. The protein is M-myrmeciitoxin-Mb1a of Myrmecia banksi (Jack jumper ant).